A 185-amino-acid polypeptide reads, in one-letter code: Acireductone dioxygenase (185 aa).

Fe(2+) contacts are provided by His-97, His-99, Glu-103, and His-141. Residues His-97, His-99, Glu-103, and His-141 each coordinate Ni(2+).

The protein belongs to the acireductone dioxygenase (ARD) family. As to quaternary structure, monomer. Requires Fe(2+) as cofactor. It depends on Ni(2+) as a cofactor.

It catalyses the reaction 1,2-dihydroxy-5-(methylsulfanyl)pent-1-en-3-one + O2 = 3-(methylsulfanyl)propanoate + CO + formate + 2 H(+). The catalysed reaction is 1,2-dihydroxy-5-(methylsulfanyl)pent-1-en-3-one + O2 = 4-methylsulfanyl-2-oxobutanoate + formate + 2 H(+). It participates in amino-acid biosynthesis; L-methionine biosynthesis via salvage pathway; L-methionine from S-methyl-5-thio-alpha-D-ribose 1-phosphate: step 5/6. Its function is as follows. Catalyzes 2 different reactions between oxygen and the acireductone 1,2-dihydroxy-3-keto-5-methylthiopentene (DHK-MTPene) depending upon the metal bound in the active site. Fe-containing acireductone dioxygenase (Fe-ARD) produces formate and 2-keto-4-methylthiobutyrate (KMTB), the alpha-ketoacid precursor of methionine in the methionine recycle pathway. Ni-containing acireductone dioxygenase (Ni-ARD) produces methylthiopropionate, carbon monoxide and formate, and does not lie on the methionine recycle pathway. This chain is Acireductone dioxygenase, found in Stenotrophomonas maltophilia (strain R551-3).